Reading from the N-terminus, the 408-residue chain is LL-diaminopimelate aminotransferase (408 aa).

Residues Tyr15 and Gly42 each contribute to the substrate site. Pyridoxal 5'-phosphate is bound by residues Tyr72, 108-109 (SK), Tyr132, Asn187, Tyr218, and 246-248 (SFS). Residues Lys109, Tyr132, and Asn187 each coordinate substrate. The residue at position 249 (Lys249) is an N6-(pyridoxal phosphate)lysine. Pyridoxal 5'-phosphate-binding residues include Arg257 and Asn292. Positions 292 and 388 each coordinate substrate.

This sequence belongs to the class-I pyridoxal-phosphate-dependent aminotransferase family. LL-diaminopimelate aminotransferase subfamily. As to quaternary structure, homodimer. Pyridoxal 5'-phosphate serves as cofactor.

It catalyses the reaction (2S,6S)-2,6-diaminopimelate + 2-oxoglutarate = (S)-2,3,4,5-tetrahydrodipicolinate + L-glutamate + H2O + H(+). It functions in the pathway amino-acid biosynthesis; L-lysine biosynthesis via DAP pathway; LL-2,6-diaminopimelate from (S)-tetrahydrodipicolinate (aminotransferase route): step 1/1. Involved in the synthesis of meso-diaminopimelate (m-DAP or DL-DAP), required for both lysine and peptidoglycan biosynthesis. Catalyzes the direct conversion of tetrahydrodipicolinate to LL-diaminopimelate. The protein is LL-diaminopimelate aminotransferase of Prochlorococcus marinus (strain MIT 9211).